A 306-amino-acid chain; its full sequence is D-alanine--D-alanine ligase (306 aa).

An ATP-grasp domain is found at 101 to 300 (KVVMAAAGIP…FGELVTWMVE (200 aa)). 128 to 182 (LPPPYVLKPNTGGSSVGVFIVKEDQPHPPQELFRADWTFGESLMAEPFIKGLELT) is an ATP binding site. Residues Asp-250, Glu-267, and Asn-269 each coordinate Mg(2+).

The protein belongs to the D-alanine--D-alanine ligase family. The cofactor is Mg(2+). Mn(2+) is required as a cofactor.

It is found in the cytoplasm. It carries out the reaction 2 D-alanine + ATP = D-alanyl-D-alanine + ADP + phosphate + H(+). It participates in cell wall biogenesis; peptidoglycan biosynthesis. Functionally, cell wall formation. The sequence is that of D-alanine--D-alanine ligase from Azorhizobium caulinodans (strain ATCC 43989 / DSM 5975 / JCM 20966 / LMG 6465 / NBRC 14845 / NCIMB 13405 / ORS 571).